Consider the following 525-residue polypeptide: Sodium-dependent lysophosphatidylcholine symporter 1 (525 aa).

The disordered stretch occupies residues 1–29; it reads MEKESENASCAGLLGQKNEPGSPTQSRSG. At 1–32 the chain is on the cytoplasmic side; the sequence is MEKESENASCAGLLGQKNEPGSPTQSRSGKHK. The chain crosses the membrane as a helical span at residues 33–62; sequence LSVCSKICFAIGGAPYQITGCALGFFLQIF. Residues 63 to 73 lie on the Extracellular side of the membrane; sequence LLDIAQVPPFY. The helical transmembrane segment at 74 to 94 threads the bilayer; that stretch reads ASIILFSGRVWDAITDPLVGF. The Cytoplasmic portion of the chain corresponds to 95–106; that stretch reads FVSKSSWTRLGR. The chain crosses the membrane as a helical span at residues 107–126; that stretch reads LLPWVVFSTPFAVVSYLLIW. Residues 127–137 are Extracellular-facing; sequence FVPGFSGVSMV. The chain crosses the membrane as a helical span at residues 138-162; sequence IWYLVFYCLFQTLVTCFHVPYSALT. Residues 163–169 lie on the Cytoplasmic side of the membrane; sequence MFISKEQ. The chain crosses the membrane as a helical span at residues 170 to 201; sequence SDRDSATGYRMTVEVLGTVLGTAIQGQIVGRE. At 202–226 the chain is on the extracellular side; it reads NTPCVEHIRETHLYNTSVIMEDLNI. A disulfide bridge connects residues Cys-205 and Cys-458. Asn-216 and Asn-225 each carry an N-linked (GlcNAc...) asparagine glycan. The chain crosses the membrane as a helical span at residues 227 to 260; it reads THDVESLSSTRDAYMIAAGVICAIYVLCAIILTL. Residues 261–291 are Cytoplasmic-facing; the sequence is GVREKRDAYELLSDQPFSFWQGLKLVMSHKP. The chain crosses the membrane as a helical span at residues 292 to 318; that stretch reads YIKLITGFLFTSLAFMLLEGNFALFLT. Residues 319–329 lie on the Extracellular side of the membrane; the sequence is YTMGFRRDFQN. The chain crosses the membrane as a helical span at residues 330–348; sequence ILLVVMLSATLTVPFWQWF. Over 349–352 the chain is Cytoplasmic; it reads LTRF. A helical membrane pass occupies residues 353-374; that stretch reads GKKTAVYFGISSVIPFLILVVL. The Extracellular segment spans residues 375-377; that stretch reads MES. Residues 378–414 traverse the membrane as a helical segment; sequence NLILAYVVAVAAGLSVAAAFLLPWSMLPDVIDDFILK. The Cytoplasmic segment spans residues 415-424; the sequence is NPDSHGHEPI. The chain crosses the membrane as a helical span at residues 425–451; it reads FFSFYVFFTKFASGVSLGISTLSLDFA. Topologically, residues 452-463 are extracellular; it reads GYQTRACSQPEQ. The helical transmembrane segment at 464–487 threads the bilayer; sequence VNLTLKMLICVAPVILILLGLLLF. Topologically, residues 488 to 525 are cytoplasmic; sequence ILYPINEEKRKQNKKALQLIRESNRDSDSDSLELASNV.

Belongs to the major facilitator superfamily.

The protein localises to the cell membrane. It localises to the endoplasmic reticulum membrane. The enzyme catalyses a 1-acyl-sn-glycero-3-phosphocholine(in) + Na(+)(in) = a 1-acyl-sn-glycero-3-phosphocholine(out) + Na(+)(out). It catalyses the reaction 1-(4Z,7Z,10Z,13Z,16Z,19Z-docosahexaenoyl)-sn-glycero-3-phosphocholine(in) + Na(+)(in) = 1-(4Z,7Z,10Z,13Z,16Z,19Z-docosahexaenoyl)-sn-glycero-3-phosphocholine(out) + Na(+)(out). The catalysed reaction is 1-(9Z-octadecenoyl)-sn-glycero-3-phosphocholine(in) + Na(+)(in) = 1-(9Z-octadecenoyl)-sn-glycero-3-phosphocholine(out) + Na(+)(out). It carries out the reaction 1-hexadecanoyl-sn-glycero-3-phosphocholine(in) + Na(+)(in) = 1-hexadecanoyl-sn-glycero-3-phosphocholine(out) + Na(+)(out). The enzyme catalyses a 1-acyl-sn-glycero-3-phosphoethanolamine(in) + Na(+)(in) = a 1-acyl-sn-glycero-3-phosphoethanolamine(out) + Na(+)(out). Sodium-dependent lysophosphatidylcholine (LPC) symporter, which plays an essential role for blood-brain barrier formation and function. Specifically expressed in endothelium of the blood-brain barrier of micro-vessels and transports LPC into the brain. Transport of LPC is essential because it constitutes the major mechanism by which docosahexaenoic acid (DHA), an omega-3 fatty acid that is essential for normal brain growth and cognitive function, enters the brain. Transports LPC carrying long-chain fatty acids such LPC oleate and LPC palmitate with a minimum acyl chain length of 14 carbons. Does not transport docosahexaenoic acid in unesterified fatty acid. In Xenopus tropicalis (Western clawed frog), this protein is Sodium-dependent lysophosphatidylcholine symporter 1 (mfsd2a).